Consider the following 197-residue polypeptide: Anthranilate synthase component 2 (197 aa).

One can recognise a Glutamine amidotransferase type-1 domain in the interval 5–197; that stretch reads KVLVIDNIDS…LIKNFVESEY (193 aa). Position 55–57 (55–57) interacts with L-glutamine; sequence GPK. The active-site Nucleophile; for GATase activity is the cysteine 80. Residues glutamine 84 and 130 to 131 contribute to the L-glutamine site; that span reads SL. Active-site for GATase activity residues include histidine 168 and glutamate 170.

As to quaternary structure, heterotetramer consisting of two non-identical subunits: a beta subunit (TrpG) and a large alpha subunit (TrpE).

The enzyme catalyses chorismate + L-glutamine = anthranilate + pyruvate + L-glutamate + H(+). It participates in amino-acid biosynthesis; L-tryptophan biosynthesis; L-tryptophan from chorismate: step 1/5. Functionally, part of a heterotetrameric complex that catalyzes the two-step biosynthesis of anthranilate, an intermediate in the biosynthesis of L-tryptophan. In the first step, the glutamine-binding beta subunit (TrpG) of anthranilate synthase (AS) provides the glutamine amidotransferase activity which generates ammonia as a substrate that, along with chorismate, is used in the second step, catalyzed by the large alpha subunit of AS (TrpE) to produce anthranilate. In the absence of TrpG, TrpE can synthesize anthranilate directly from chorismate and high concentrations of ammonia. The sequence is that of Anthranilate synthase component 2 (trpG) from Methanocaldococcus jannaschii (strain ATCC 43067 / DSM 2661 / JAL-1 / JCM 10045 / NBRC 100440) (Methanococcus jannaschii).